The chain runs to 184 residues: Probable chorismate pyruvate-lyase 1 (184 aa).

Substrate contacts are provided by arginine 70, leucine 108, and glutamate 166.

The protein belongs to the UbiC family.

The protein localises to the cytoplasm. It catalyses the reaction chorismate = 4-hydroxybenzoate + pyruvate. Its pathway is cofactor biosynthesis; ubiquinone biosynthesis. Removes the pyruvyl group from chorismate, with concomitant aromatization of the ring, to provide 4-hydroxybenzoate (4HB) for the ubiquinone pathway. The sequence is that of Probable chorismate pyruvate-lyase 1 from Burkholderia pseudomallei (strain 1710b).